We begin with the raw amino-acid sequence, 136 residues long: MKTLWIVAVWLIAVEGNLYQFGRMIWNRTGKLPILSYGSYGCYCGWGGQGPPKDATDRCCLVHDCCYTRVGDCSPKMTLYSYRFENGDIICDNKDPCKRAVCECDREAAICLGENVNTYDKKYKSYEDCTEEVQEC.

Residues 1–16 form the signal peptide; it reads MKTLWIVAVWLIAVEG. 7 disulfides stabilise this stretch: Cys-42/Cys-129, Cys-44/Cys-60, Cys-59/Cys-111, Cys-65/Cys-136, Cys-66/Cys-104, Cys-73/Cys-97, and Cys-91/Cys-102. Tyr-43, Gly-45, and Gly-47 together coordinate Ca(2+). Residue His-63 is part of the active site. Asp-64 serves as a coordination point for Ca(2+). Asp-105 is a catalytic residue. The interval 112 to 133 is may be responsible for inhibition of the platelet-aggregation activity; sequence LGENVNTYDKKYKSYEDCTEEV.

This sequence belongs to the phospholipase A2 family. Group II subfamily. D49 sub-subfamily. As to quaternary structure, monomer. Ca(2+) serves as cofactor. Expressed by the venom gland.

Its subcellular location is the secreted. The catalysed reaction is a 1,2-diacyl-sn-glycero-3-phosphocholine + H2O = a 1-acyl-sn-glycero-3-phosphocholine + a fatty acid + H(+). Its function is as follows. Snake venom phospholipase A2 (PLA2) that inhibits human platelet aggregation induced by ADP, collagen and epinephrin (possibly by binding the platelet receptor alpha-IIb/beta-III) and induces mild edema in the foot pads of mice. PLA2 catalyzes the calcium-dependent hydrolysis of the 2-acyl groups in 3-sn-phosphoglycerides. The polypeptide is Acidic phospholipase A2 EC-I (Echis carinatus (Saw-scaled viper)).